Consider the following 666-residue polypeptide: Heparin-sulfate lyase (666 aa).

A signal peptide spans 1-22; the sequence is MNKTFKYIVLLALACFVGKANA. The active-site Proton acceptor is Tyr301.

The protein belongs to the polysaccharide lyase 12 family.

It is found in the periplasm. It catalyses the reaction Elimination of sulfate, appears to act on linkages between N-acetyl-D-glucosamine and uronate. Product is an unsaturated sugar.. Its function is as follows. Specifically cleaves heparan sulfate-rich regions of acidic polysaccharides. Also able to degrade heparin and hyaluronic acid. Does not act on N,O-desulfated glucosamine or N-acetyl-O-sulfated glucosamine linkages. Functions in cleaving metazoan heparan sulfate and providing carbon, nitrogen and sulfate sources for microorganisms. In Bacteroides stercoris, this protein is Heparin-sulfate lyase (hepC).